The sequence spans 398 residues: Lysophospholipid transporter LplT (398 aa).

A run of 11 helical transmembrane segments spans residues 17 to 37 (AVLV…FAIL), 52 to 72 (ILQI…GQIA), 90 to 110 (LGAF…LVGV), 137 to 157 (GLME…GGFL), 163 to 183 (AIAL…NFFI), 226 to 246 (LFWG…PVVL), 256 to 276 (ILNV…ARFI), 285 to 305 (MPAG…HSIW), 309 to 329 (VLLI…NALL), 352 to 372 (IAML…VPVV), and 373 to 393 (TTGI…WIWN).

This sequence belongs to the major facilitator superfamily. LplT (TC 2.A.1.42) family.

It is found in the cell inner membrane. Catalyzes the facilitated diffusion of 2-acyl-glycero-3-phosphoethanolamine (2-acyl-GPE) into the cell. The polypeptide is Lysophospholipid transporter LplT (Photorhabdus laumondii subsp. laumondii (strain DSM 15139 / CIP 105565 / TT01) (Photorhabdus luminescens subsp. laumondii)).